The primary structure comprises 58 residues: Photosystem II reaction center protein K (58 aa).

Residues 1-21 (MFNAYLDTVLDLSANGTVILA) constitute a propeptide that is removed on maturation. A helical transmembrane segment spans residues 29–49 (IFDPIVDVMPIIPVFFLLLAF).

Belongs to the PsbK family. PSII is composed of 1 copy each of membrane proteins PsbA, PsbB, PsbC, PsbD, PsbE, PsbF, PsbH, PsbI, PsbJ, PsbK, PsbL, PsbM, PsbT, PsbX, PsbY, PsbZ, Psb30/Ycf12, at least 3 peripheral proteins of the oxygen-evolving complex and a large number of cofactors. It forms dimeric complexes.

It localises to the plastid. The protein resides in the chloroplast thylakoid membrane. In terms of biological role, one of the components of the core complex of photosystem II (PSII). PSII is a light-driven water:plastoquinone oxidoreductase that uses light energy to abstract electrons from H(2)O, generating O(2) and a proton gradient subsequently used for ATP formation. It consists of a core antenna complex that captures photons, and an electron transfer chain that converts photonic excitation into a charge separation. The polypeptide is Photosystem II reaction center protein K (Staurastrum punctulatum (Green alga)).